The sequence spans 351 residues: UDP-3-O-acylglucosamine N-acyltransferase (351 aa).

His-240 functions as the Proton acceptor in the catalytic mechanism.

This sequence belongs to the transferase hexapeptide repeat family. LpxD subfamily. Homotrimer.

It catalyses the reaction a UDP-3-O-[(3R)-3-hydroxyacyl]-alpha-D-glucosamine + a (3R)-hydroxyacyl-[ACP] = a UDP-2-N,3-O-bis[(3R)-3-hydroxyacyl]-alpha-D-glucosamine + holo-[ACP] + H(+). It functions in the pathway bacterial outer membrane biogenesis; LPS lipid A biosynthesis. Catalyzes the N-acylation of UDP-3-O-acylglucosamine using 3-hydroxyacyl-ACP as the acyl donor. Is involved in the biosynthesis of lipid A, a phosphorylated glycolipid that anchors the lipopolysaccharide to the outer membrane of the cell. This Pseudomonas fluorescens (strain Pf0-1) protein is UDP-3-O-acylglucosamine N-acyltransferase.